Consider the following 30-residue polypeptide: Cyclotide cycloviolacin O17 (30 aa).

Residues 1–30 (GIPCGESCVWIPCISAAIGCSCKNKVCYRN) constitute a cross-link (cyclopeptide (Gly-Asn)). 3 disulfide bridges follow: cysteine 4/cysteine 20, cysteine 8/cysteine 22, and cysteine 13/cysteine 27.

In terms of processing, this is a cyclic peptide.

Functionally, probably participates in a plant defense mechanism. The sequence is that of Cyclotide cycloviolacin O17 from Psychotria brachyceras.